The chain runs to 223 residues: Alpha-enolase (223 aa).

Ser8 is a Mg(2+) binding site. Tyr12 carries the phosphotyrosine modification. Lys25 bears the N6-acetyllysine mark. Residue Glu39 coordinates substrate. Residue Lys61 is modified to N6-acetyllysine. Catalysis depends on Glu69, which acts as the Proton donor. Lys87 carries the N6-acetyllysine; alternate modification. Position 87 is an N6-malonyllysine; alternate (Lys87). Position 87 is an N6-succinyllysine; alternate (Lys87). Positions 99 and 119 each coordinate Mg(2+). Asp119 lines the substrate pocket. Residues Lys133 and Lys141 each carry the N6-acetyllysine modification. Residue Lys141 is the Proton acceptor of the active site. Residues Ser168–Ser171 and Lys192 each bind substrate. The interval Tyr202–Lys223 is required for interaction with PLG. Position 215 is an N6-acetyllysine; alternate (Lys215). Lys215 carries the N6-malonyllysine; alternate modification. Lys215 is modified (N6-succinyllysine; alternate).

Belongs to the enolase family. As to quaternary structure, mammalian enolase is composed of 3 isozyme subunits, alpha, beta and gamma, which can form homodimers or heterodimers which are cell-type and development-specific. ENO1 interacts with PLG in the neuronal plasma membrane and promotes its activation. The C-terminal lysine is required for this binding. Interacts with ENO4 and PGAM2. Interacts with CMTM6. It depends on Mg(2+) as a cofactor. In terms of processing, ISGylated. Lysine 2-hydroxyisobutyrylation (Khib) by p300/EP300 activates the phosphopyruvate hydratase activity.

It is found in the cytoplasm. Its subcellular location is the cell membrane. It carries out the reaction (2R)-2-phosphoglycerate = phosphoenolpyruvate + H2O. It participates in carbohydrate degradation; glycolysis; pyruvate from D-glyceraldehyde 3-phosphate: step 4/5. In terms of biological role, glycolytic enzyme the catalyzes the conversion of 2-phosphoglycerate to phosphoenolpyruvate. In addition to glycolysis, involved in various processes such as growth control, hypoxia tolerance and allergic responses. May also function in the intravascular and pericellular fibrinolytic system due to its ability to serve as a receptor and activator of plasminogen on the cell surface of several cell-types such as leukocytes and neurons. Stimulates immunoglobulin production. This Mesocricetus auratus (Golden hamster) protein is Alpha-enolase.